Here is a 257-residue protein sequence, read N- to C-terminus: Imidazole glycerol phosphate synthase subunit HisF (257 aa).

Catalysis depends on residues Asp11 and Asp130.

It belongs to the HisA/HisF family. As to quaternary structure, heterodimer of HisH and HisF.

The protein localises to the cytoplasm. The catalysed reaction is 5-[(5-phospho-1-deoxy-D-ribulos-1-ylimino)methylamino]-1-(5-phospho-beta-D-ribosyl)imidazole-4-carboxamide + L-glutamine = D-erythro-1-(imidazol-4-yl)glycerol 3-phosphate + 5-amino-1-(5-phospho-beta-D-ribosyl)imidazole-4-carboxamide + L-glutamate + H(+). Its pathway is amino-acid biosynthesis; L-histidine biosynthesis; L-histidine from 5-phospho-alpha-D-ribose 1-diphosphate: step 5/9. Its function is as follows. IGPS catalyzes the conversion of PRFAR and glutamine to IGP, AICAR and glutamate. The HisF subunit catalyzes the cyclization activity that produces IGP and AICAR from PRFAR using the ammonia provided by the HisH subunit. This chain is Imidazole glycerol phosphate synthase subunit HisF, found in Shewanella woodyi (strain ATCC 51908 / MS32).